The chain runs to 429 residues: UDP-N-acetylglucosamine 1-carboxyvinyltransferase (429 aa).

22–23 (KN) is a binding site for phosphoenolpyruvate. UDP-N-acetyl-alpha-D-glucosamine is bound at residue Arg-102. Cys-126 serves as the catalytic Proton donor. Cys-126 is modified (2-(S-cysteinyl)pyruvic acid O-phosphothioketal). UDP-N-acetyl-alpha-D-glucosamine-binding positions include 131–135 (RPVDL), Asp-316, and Ile-338.

It belongs to the EPSP synthase family. MurA subfamily.

It is found in the cytoplasm. It carries out the reaction phosphoenolpyruvate + UDP-N-acetyl-alpha-D-glucosamine = UDP-N-acetyl-3-O-(1-carboxyvinyl)-alpha-D-glucosamine + phosphate. It participates in cell wall biogenesis; peptidoglycan biosynthesis. Its function is as follows. Cell wall formation. Adds enolpyruvyl to UDP-N-acetylglucosamine. This Methylorubrum extorquens (strain CM4 / NCIMB 13688) (Methylobacterium extorquens) protein is UDP-N-acetylglucosamine 1-carboxyvinyltransferase.